A 216-amino-acid polypeptide reads, in one-letter code: Penicillin-binding protein activator LpoB (216 aa).

An N-terminal signal peptide occupies residues 1–20 (MIKNLSRYALVTAFALFLSG). Cysteine 21 carries N-palmitoyl cysteine lipidation. Residue cysteine 21 is the site of S-diacylglycerol cysteine attachment. The interval 28-77 (QPAPVDEAKPGTEQPAQPTQPVPTVPSVPTVPAQPGPIEHPDQTSQPAPR) is disordered.

The protein belongs to the LpoB family. In terms of assembly, interacts with PBP1b.

It is found in the cell outer membrane. Regulator of peptidoglycan synthesis that is essential for the function of penicillin-binding protein 1B (PBP1b). This is Penicillin-binding protein activator LpoB from Enterobacter sp. (strain 638).